Here is a 387-residue protein sequence, read N- to C-terminus: MTVGLGMPQPPAPTLAPRRATRQLMVGNVGVGSDHPVSVQSMCTTKTHDVNSTLQQIAELTAAGCDIVRVACPRQEDADALAEIARHSQIPVVADIHFQPRYIFAAIDAGCAAVRVNPGNIKEFDGRVGEVAKAAGAAGIPIRIGVNAGSLDKRFMEKYGKATPEALVESALWEASLFEEHGFGDIKISVKHNDPVVMVAAYELLAARCDYPLHLGVTEAGPAFQGTIKSAVAFGALLSRGIGDTIRVSLSAPPVEEVKVGNQVLESLNLRPRSLEIVSCPSCGRAQVDVYTLANEVTAGLDGLDVPLRVAVMGCVVNGPGEAREADLGVASGNGKGQIFVRGEVIKTVPEAQIVETLIEEAMRLAAEMGEQDPGATPSGSPIVTVS.

Residues cysteine 280, cysteine 283, cysteine 315, and glutamate 322 each coordinate [4Fe-4S] cluster.

Belongs to the IspG family. The cofactor is [4Fe-4S] cluster.

The catalysed reaction is (2E)-4-hydroxy-3-methylbut-2-enyl diphosphate + oxidized [flavodoxin] + H2O + 2 H(+) = 2-C-methyl-D-erythritol 2,4-cyclic diphosphate + reduced [flavodoxin]. It participates in isoprenoid biosynthesis; isopentenyl diphosphate biosynthesis via DXP pathway; isopentenyl diphosphate from 1-deoxy-D-xylulose 5-phosphate: step 5/6. Functionally, converts 2C-methyl-D-erythritol 2,4-cyclodiphosphate (ME-2,4cPP) into 1-hydroxy-2-methyl-2-(E)-butenyl 4-diphosphate. The chain is 4-hydroxy-3-methylbut-2-en-1-yl diphosphate synthase (flavodoxin) from Mycobacterium bovis (strain BCG / Pasteur 1173P2).